We begin with the raw amino-acid sequence, 62 residues long: MKVNDRVTVKTDGGPRRPGVVLAVEEFNEGTMYLVSLEDYPLGIWFFNESGHPDGIFVEKME.

It belongs to the DsrB family.

This is Protein DsrB from Escherichia fergusonii (strain ATCC 35469 / DSM 13698 / CCUG 18766 / IAM 14443 / JCM 21226 / LMG 7866 / NBRC 102419 / NCTC 12128 / CDC 0568-73).